The following is a 209-amino-acid chain: MSKVYVFDHPLIQHKLTYIRDKNTGTKEFRELVDEVATLMAFEITRDMPVEEIEIETPVTIAKTKVLSGKKLAIVPILRAGIGMVDGVLKLIPAAKVGHIGLYRDPETLKPVEYYAKLPADVEERDFIIVDPMLATGGSAVEAIHSLKKRGAKNIKFMCLIAAPEGVKAIQEEHSDVDIYIAALDEKLNDHGYIVPGLGDAGDRLFGTK.

5-phospho-alpha-D-ribose 1-diphosphate contacts are provided by residues arginine 79, arginine 104, and 131–139; that span reads DPMLATGGS. Residues isoleucine 194 and 199-201 each bind uracil; that span reads GDA. Aspartate 200 lines the 5-phospho-alpha-D-ribose 1-diphosphate pocket.

It belongs to the UPRTase family. Mg(2+) is required as a cofactor.

The catalysed reaction is UMP + diphosphate = 5-phospho-alpha-D-ribose 1-diphosphate + uracil. It functions in the pathway pyrimidine metabolism; UMP biosynthesis via salvage pathway; UMP from uracil: step 1/1. With respect to regulation, allosterically activated by GTP. In terms of biological role, catalyzes the conversion of uracil and 5-phospho-alpha-D-ribose 1-diphosphate (PRPP) to UMP and diphosphate. This chain is Uracil phosphoribosyltransferase, found in Lysinibacillus sphaericus (strain C3-41).